We begin with the raw amino-acid sequence, 867 residues long: Bifunctional isopimaradiene synthase, chloroplastic (867 aa).

Residues 1–68 (MALLSSSLSS…VGEGTTSLPY (68 aa)) constitute a chloroplast transit peptide. A substrate-binding site is contributed by K267. Residues D400 and D402 each contribute to the Mg(2+) site. Positions 400–403 (DIDD) match the DXDD motif motif. Position 487 (K487) interacts with substrate. 5 residues coordinate Mg(2+): D619, D623, N763, T767, and E771. The DDXXD motif motif lies at 619-623 (DDLYD).

The protein belongs to the terpene synthase family. Tpsd subfamily. Requires Mg(2+) as cofactor.

It localises to the plastid. It is found in the chloroplast. It carries out the reaction (2E,6E,10E)-geranylgeranyl diphosphate = (+)-copalyl diphosphate. The catalysed reaction is (+)-copalyl diphosphate = isopimara-7,15-diene + diphosphate. The protein operates within terpene metabolism; oleoresin biosynthesis. Its function is as follows. Involved in defensive oleoresin formation in conifers in response to insect attack or other injury. Involved in diterpene (C20) olefins biosynthesis. Bifunctional enzyme that catalyzes two sequential cyclizations of geranylgeranyl diphosphate (GGPP) to isopimara-7,15-diene. This chain is Bifunctional isopimaradiene synthase, chloroplastic (TPS-ISO), found in Picea abies (Norway spruce).